Reading from the N-terminus, the 206-residue chain is AT-hook motif nuclear-localized protein 28 (206 aa).

Disordered regions lie at residues 1–21 and 160–206; these read METV…PKAP and TEEE…PSPY. The a.T hook DNA-binding region spans 5–17; the sequence is GRPRGRPRGSKNK. A compositionally biased stretch (basic residues) spans 7 to 18; sequence PRGRPRGSKNKP. A PPC domain is found at 27–173; the sequence is DPPMSPYILE…QRNSAEGEEE (147 aa).

Its subcellular location is the nucleus. In terms of biological role, transcription factor that specifically binds AT-rich DNA sequences related to the nuclear matrix attachment regions (MARs). This is AT-hook motif nuclear-localized protein 28 from Arabidopsis thaliana (Mouse-ear cress).